The chain runs to 729 residues: Phosphoribosylformylglycinamidine synthase subunit PurL (729 aa).

The active site involves His54. ATP contacts are provided by Tyr57 and Lys96. A Mg(2+)-binding site is contributed by Glu98. Substrate is bound by residues Ser99–His102 and Arg121. The active-site Proton acceptor is His100. Asp122 contacts Mg(2+). Gln245 serves as a coordination point for substrate. Asp273 serves as a coordination point for Mg(2+). Glu317–Gln319 contacts substrate. ATP is bound by residues Asp495 and Gly532. Asn533 contributes to the Mg(2+) binding site. Ser535 is a substrate binding site.

This sequence belongs to the FGAMS family. In terms of assembly, monomer. Part of the FGAM synthase complex composed of 1 PurL, 1 PurQ and 2 PurS subunits.

The protein localises to the cytoplasm. The enzyme catalyses N(2)-formyl-N(1)-(5-phospho-beta-D-ribosyl)glycinamide + L-glutamine + ATP + H2O = 2-formamido-N(1)-(5-O-phospho-beta-D-ribosyl)acetamidine + L-glutamate + ADP + phosphate + H(+). Its pathway is purine metabolism; IMP biosynthesis via de novo pathway; 5-amino-1-(5-phospho-D-ribosyl)imidazole from N(2)-formyl-N(1)-(5-phospho-D-ribosyl)glycinamide: step 1/2. Part of the phosphoribosylformylglycinamidine synthase complex involved in the purines biosynthetic pathway. Catalyzes the ATP-dependent conversion of formylglycinamide ribonucleotide (FGAR) and glutamine to yield formylglycinamidine ribonucleotide (FGAM) and glutamate. The FGAM synthase complex is composed of three subunits. PurQ produces an ammonia molecule by converting glutamine to glutamate. PurL transfers the ammonia molecule to FGAR to form FGAM in an ATP-dependent manner. PurS interacts with PurQ and PurL and is thought to assist in the transfer of the ammonia molecule from PurQ to PurL. This is Phosphoribosylformylglycinamidine synthase subunit PurL from Staphylococcus carnosus (strain TM300).